Here is a 362-residue protein sequence, read N- to C-terminus: Epoxyqueuosine reductase (362 aa).

The active-site Proton donor is aspartate 143. The region spanning 191-220 (PDSPKHQDSCGKCQACIKLCPTGAIQPGKM) is the 4Fe-4S ferredoxin-type domain. The [4Fe-4S] cluster site is built by cysteine 200, cysteine 203, cysteine 206, cysteine 210, cysteine 226, cysteine 253, cysteine 256, and cysteine 260.

It belongs to the QueG family. As to quaternary structure, monomer. Cob(II)alamin serves as cofactor. Requires [4Fe-4S] cluster as cofactor.

The protein resides in the cytoplasm. The enzyme catalyses epoxyqueuosine(34) in tRNA + AH2 = queuosine(34) in tRNA + A + H2O. It functions in the pathway tRNA modification; tRNA-queuosine biosynthesis. Its function is as follows. Catalyzes the conversion of epoxyqueuosine (oQ) to queuosine (Q), which is a hypermodified base found in the wobble positions of tRNA(Asp), tRNA(Asn), tRNA(His) and tRNA(Tyr). The protein is Epoxyqueuosine reductase of Francisella cf. novicida (strain Fx1).